Reading from the N-terminus, the 189-residue chain is UPF0398 protein LCK_00599 (189 aa).

This sequence belongs to the UPF0398 family.

This chain is UPF0398 protein LCK_00599, found in Leuconostoc citreum (strain KM20).